The primary structure comprises 154 residues: Endoribonuclease YbeY (154 aa).

3 residues coordinate Zn(2+): H113, H117, and H123.

This sequence belongs to the endoribonuclease YbeY family. It depends on Zn(2+) as a cofactor.

The protein localises to the cytoplasm. In terms of biological role, single strand-specific metallo-endoribonuclease involved in late-stage 70S ribosome quality control and in maturation of the 3' terminus of the 16S rRNA. This chain is Endoribonuclease YbeY, found in Vibrio parahaemolyticus serotype O3:K6 (strain RIMD 2210633).